A 227-amino-acid polypeptide reads, in one-letter code: Cytidylate kinase (227 aa).

12–20 (GPSGAGKGT) contacts ATP.

It belongs to the cytidylate kinase family. Type 1 subfamily.

It is found in the cytoplasm. The enzyme catalyses CMP + ATP = CDP + ADP. It catalyses the reaction dCMP + ATP = dCDP + ADP. The polypeptide is Cytidylate kinase (Photorhabdus laumondii subsp. laumondii (strain DSM 15139 / CIP 105565 / TT01) (Photorhabdus luminescens subsp. laumondii)).